Reading from the N-terminus, the 1153-residue chain is Duffy receptor beta form (1153 aa).

The first 21 residues, 1-21 (MEGKKKRPLFFLLVLLLSHKA), serve as a signal peptide directing secretion. The Extracellular portion of the chain corresponds to 22–1085 (NNVLFERMKG…YECFTKGSST (1064 aa)). N-linked (GlcNAc...) asparagine glycosylation is found at N134, N179, and N202. 2 disulfides stabilise this stretch: C214/C243 and C227/C234. N252 and N348 each carry an N-linked (GlcNAc...) asparagine glycan. 4 disulfide bridges follow: C297–C374, C412–C429, C424–C504, and C433–C502. N-linked (GlcNAc...) asparagine glycosylation is found at N430 and N467. 4 disordered regions span residues 520–545 (LKSA…GAEK), 565–591 (DEAA…DNIE), 612–631 (RGAT…SYSG), and 655–981 (ENSE…LYSH). Composition is skewed to polar residues over residues 531–542 (SHSTIQPMSSSG) and 574–586 (NGNQ…NIKG). Residues N576 and N626 are each glycosylated (N-linked (GlcNAc...) asparagine). The span at 661-675 (LETKHKIFEPSKDNS) shows a compositional bias: basic and acidic residues. A compositionally biased stretch (polar residues) spans 677-733 (NSENSGSMEFKATSSNPITEAVESSSAEGQVQEDSAHRSVNTGRDNSTISAATSDDG). N-linked (GlcNAc...) asparagine glycosylation is present at N722. The span at 791–800 (IDGKNVDIAE) shows a compositional bias: basic and acidic residues. The segment covering 819–834 (TDNGNVPRSGNKQNEG) has biased composition (polar residues). N847 and N856 each carry an N-linked (GlcNAc...) asparagine glycan. Positions 867–878 (GNEKDFQKHDFM) are enriched in basic and acidic residues. Over residues 884–942 (NDQTSSDQTSSDQTSSNQTSSDQTSSNQTSSDQTSSDQISSDQTSSDQTSSNQTSSDQT) the composition is skewed to low complexity. 3 N-linked (GlcNAc...) asparagine glycosylation sites follow: N900, N910, and N935. Residues 945-969 (TEEHHRDNVRNPEIKSSEDMSKGDF) are compositionally biased toward basic and acidic residues. Positions 971–981 (RNSNSNELYSH) are enriched in polar residues. Residues 1086-1106 (GIGIVYFATGGAFLIILLLFV) form a helical membrane-spanning segment. Residues 1107–1153 (SKNVASNDYEEEATFDEFVEYSDDIHRTPLMPNHIEHMQQFTPLDYS) lie on the Cytoplasmic side of the membrane.

It localises to the membrane. In terms of biological role, binds to Neu5Gc-sialylated receptors on macaque erythrocytes. This is Duffy receptor beta form from Plasmodium knowlesi.